Here is a 459-residue protein sequence, read N- to C-terminus: tRNA modification GTPase MnmE (459 aa).

Arginine 22, glutamate 85, and arginine 124 together coordinate (6S)-5-formyl-5,6,7,8-tetrahydrofolate. The TrmE-type G domain maps to 221-380 (GLSTVIVGKP…LEIQIRDLFF (160 aa)). Asparagine 231 is a K(+) binding site. GTP contacts are provided by residues 231-236 (NVGKSS), 250-256 (TEVAGTT), and 275-278 (DTAG). Position 235 (serine 235) interacts with Mg(2+). 3 residues coordinate K(+): threonine 250, valine 252, and threonine 255. Threonine 256 is a binding site for Mg(2+). Lysine 459 lines the (6S)-5-formyl-5,6,7,8-tetrahydrofolate pocket.

Belongs to the TRAFAC class TrmE-Era-EngA-EngB-Septin-like GTPase superfamily. TrmE GTPase family. Homodimer. Heterotetramer of two MnmE and two MnmG subunits. The cofactor is K(+).

Its subcellular location is the cytoplasm. Exhibits a very high intrinsic GTPase hydrolysis rate. Involved in the addition of a carboxymethylaminomethyl (cmnm) group at the wobble position (U34) of certain tRNAs, forming tRNA-cmnm(5)s(2)U34. The sequence is that of tRNA modification GTPase MnmE from Staphylococcus aureus (strain USA300 / TCH1516).